Reading from the N-terminus, the 1040-residue chain is Multidrug resistance protein MdtB (1040 aa).

12 helical membrane-spanning segments follow: residues 16–36 (FIMR…AGII), 347–367 (LMMA…NIPA), 369–389 (IIPG…MVFL), 396–416 (LTLM…IVVI), 440–460 (IGFT…PLLF), 472–492 (FAIT…TLTP), 537–557 (WLTL…WVFI), 863–883 (LGST…VLGI), 888–908 (FIHP…ALLA), 911–931 (IAGS…IGIV), 968–988 (ILMT…STGV), and 998–1018 (IGMV…TPVI).

This sequence belongs to the resistance-nodulation-cell division (RND) (TC 2.A.6) family. MdtB subfamily. Part of a tripartite efflux system composed of MdtA, MdtB and MdtC. MdtB forms a heteromultimer with MdtC.

The protein resides in the cell inner membrane. In terms of biological role, the MdtABC tripartite complex confers resistance against novobiocin and deoxycholate. In Escherichia coli O139:H28 (strain E24377A / ETEC), this protein is Multidrug resistance protein MdtB.